Consider the following 271-residue polypeptide: Formamidopyrimidine-DNA glycosylase (271 aa).

The active-site Schiff-base intermediate with DNA is Pro2. Glu3 serves as the catalytic Proton donor. Lys57 serves as the catalytic Proton donor; for beta-elimination activity. His90, Arg109, and Lys151 together coordinate DNA. Residues 236–270 (HVYGRGGETCTSCGNLLSEIRLGQRTTVFCGICQT) form an FPG-type zinc finger. The Proton donor; for delta-elimination activity role is filled by Arg260.

Belongs to the FPG family. As to quaternary structure, monomer. It depends on Zn(2+) as a cofactor.

The enzyme catalyses Hydrolysis of DNA containing ring-opened 7-methylguanine residues, releasing 2,6-diamino-4-hydroxy-5-(N-methyl)formamidopyrimidine.. It catalyses the reaction 2'-deoxyribonucleotide-(2'-deoxyribose 5'-phosphate)-2'-deoxyribonucleotide-DNA = a 3'-end 2'-deoxyribonucleotide-(2,3-dehydro-2,3-deoxyribose 5'-phosphate)-DNA + a 5'-end 5'-phospho-2'-deoxyribonucleoside-DNA + H(+). In terms of biological role, involved in base excision repair of DNA damaged by oxidation or by mutagenic agents. Acts as a DNA glycosylase that recognizes and removes damaged bases. Has a preference for oxidized purines, such as 7,8-dihydro-8-oxoguanine (8-oxoG). Has AP (apurinic/apyrimidinic) lyase activity and introduces nicks in the DNA strand. Cleaves the DNA backbone by beta-delta elimination to generate a single-strand break at the site of the removed base with both 3'- and 5'-phosphates. This Shewanella sp. (strain W3-18-1) protein is Formamidopyrimidine-DNA glycosylase.